A 647-amino-acid polypeptide reads, in one-letter code: MAQAHRESVLAAACVRTPVNPYTKAPLTLYERELGDRPHPSASVSPRGPARTSMEVPADLESRFCKTRRCQDWVFDISDIHHSEKDYYVQVEKLKNAHLHNMEQLEKMYDRKLHLNGVHNPENEKRVAEDVYRSAWEPKSLLPAQHDHLKQSRSVSPSLAESSHESTDEDYGDSEHSVSARNKILHMWNEFTVEDYVRDSEYFSQEIAKNKTSKKSKEWSHKITIPEPFQMTVRESKKREMNIKSKSEIELENNLLKEKLEEEAECQKKFRANPVPSSVYLPLYQEIVERNEERRRFVKEKSKEILLATQKPFQFIEREERKKTLRLDLMQFSTSETSTSHFKAKPVPKSIYGTSIVERLKEEELYRGIRTHMRAQELLQSSSYPTSTLASGAHSGTKKGRCYKLKGKQEHKPKISDTIPHFQTIHENQQKRLLESKSAKHVTLCEPFQLRTSNITSHKEKIEMDIQADEENLKETRWPYKSPRASAQIHSAGTMNLRLETLSQTPRSTESSKRREYAIRKREKQRTKDYMKELEAMEQRVLNKPLLIERVAQRNALLSAEKQYLNVLHELGLCEEFVTKNGQSSSVDEHVGVREEKKIPQGESTEGTLALEDLLDDEEDDKYDCESEEAEEEDAYSTDEDHRIEEI.

Disordered stretches follow at residues 32–55 (RELG…TSME) and 143–175 (PAQH…GDSE). Residues 152–161 (SRSVSPSLAE) show a composition bias toward polar residues. Coiled-coil stretches lie at residues 243–268 (IKSK…ECQK) and 518–544 (AIRK…VLNK). 2 disordered regions span residues 504–524 (QTPR…KREK) and 588–647 (DEHV…IEEI). 2 stretches are compositionally biased toward basic and acidic residues: residues 510 to 524 (ESSK…KREK) and 588 to 600 (DEHV…KKIP). A compositionally biased stretch (acidic residues) spans 613–638 (DLLDDEEDDKYDCESEEAEEEDAYST).

Belongs to the FAM161 family.

The protein resides in the cytoplasm. It is found in the cytoskeleton. Its subcellular location is the cilium basal body. It localises to the cell projection. The protein localises to the cilium. The protein resides in the microtubule organizing center. It is found in the centrosome. Its subcellular location is the centriole. Its function is as follows. Involved in ciliogenesis. This Xenopus laevis (African clawed frog) protein is Protein FAM161A (fam161a).